The primary structure comprises 476 residues: Ribulose bisphosphate carboxylase large chain (476 aa).

Residues 1–2 (MS) constitute a propeptide that is removed on maturation. The residue at position 3 (Pro3) is an N-acetylproline. An N6,N6,N6-trimethyllysine modification is found at Lys14. Substrate is bound by residues Asn123 and Thr173. Residue Lys175 is the Proton acceptor of the active site. Substrate is bound at residue Lys177. Mg(2+)-binding residues include Lys201, Asp203, and Glu204. Lys201 is subject to N6-carboxylysine. The active-site Proton acceptor is the His294. The substrate site is built by Arg295, His327, and Ser379.

It belongs to the RuBisCO large chain family. Type I subfamily. In terms of assembly, heterohexadecamer of 8 large chains and 8 small chains; disulfide-linked. The disulfide link is formed within the large subunit homodimers. It depends on Mg(2+) as a cofactor. The disulfide bond which can form in the large chain dimeric partners within the hexadecamer appears to be associated with oxidative stress and protein turnover.

It is found in the plastid. The protein localises to the chloroplast. It catalyses the reaction 2 (2R)-3-phosphoglycerate + 2 H(+) = D-ribulose 1,5-bisphosphate + CO2 + H2O. The catalysed reaction is D-ribulose 1,5-bisphosphate + O2 = 2-phosphoglycolate + (2R)-3-phosphoglycerate + 2 H(+). In terms of biological role, ruBisCO catalyzes two reactions: the carboxylation of D-ribulose 1,5-bisphosphate, the primary event in carbon dioxide fixation, as well as the oxidative fragmentation of the pentose substrate in the photorespiration process. Both reactions occur simultaneously and in competition at the same active site. The sequence is that of Ribulose bisphosphate carboxylase large chain from Phaseolus vulgaris (Kidney bean).